A 124-amino-acid chain; its full sequence is MATVNQLVRKPRLRKIVKTNVPALEGSPQKRGVCTRVYTTTPKKPNSALRKVCRVRLTNGFEVTAYIGGEGHNLQEHSVILIRGGRVKDLPGVRYHIVRGSLDCAGVKERKKGRSKYGVKKAKV.

Asp-89 carries the 3-methylthioaspartic acid modification.

The protein belongs to the universal ribosomal protein uS12 family. As to quaternary structure, part of the 30S ribosomal subunit. Contacts proteins S8 and S17. May interact with IF1 in the 30S initiation complex.

Its function is as follows. With S4 and S5 plays an important role in translational accuracy. Interacts with and stabilizes bases of the 16S rRNA that are involved in tRNA selection in the A site and with the mRNA backbone. Located at the interface of the 30S and 50S subunits, it traverses the body of the 30S subunit contacting proteins on the other side and probably holding the rRNA structure together. The combined cluster of proteins S8, S12 and S17 appears to hold together the shoulder and platform of the 30S subunit. This Buchnera aphidicola subsp. Schizaphis graminum (strain Sg) protein is Small ribosomal subunit protein uS12.